We begin with the raw amino-acid sequence, 429 residues long: Zinc finger protein 385C (429 aa).

Residues 77–107 form a Matrin-type 1 zinc finger; the sequence is ISCNICHLRFNSANQAEAHYKGHRHARKLKA. Disordered stretches follow at residues 109–224, 258–295, and 311–340; these read EAAK…GRGE, GHQGAPRRGRGRPVSRGGTGHKTKRVIGNRGGRQGPSP, and QLKQHMSSRRHKDRLAGKPPKSSSQHNKLQ. Residues 125–146 show a composition bias toward low complexity; the sequence is TVVSSASPPASGSPGTPQSKGP. Residues 147-162 are compositionally biased toward pro residues; it reads ASPPLGPSLQLPPTPD. Residues 181 to 193 show a composition bias toward low complexity; sequence CDAAASSSSSSCP. The Matrin-type 2 zinc-finger motif lies at 225–259; sequence KGRLYCPTCKVTVNSASQLQAHNTGAKHRWMVEGH. The segment covering 262–284 has biased composition (basic residues); sequence APRRGRGRPVSRGGTGHKTKRVI. The Matrin-type 3 zinc finger occupies 297 to 327; the sequence is FHCALCQLHVNSETQLKQHMSSRRHKDRLAG.

The protein resides in the nucleus. This Mus musculus (Mouse) protein is Zinc finger protein 385C.